A 296-amino-acid polypeptide reads, in one-letter code: tRNA dimethylallyltransferase (296 aa).

2-9 (GPTASGKT) lines the ATP pocket. Residue 4 to 9 (TASGKT) participates in substrate binding. Interaction with substrate tRNA regions lie at residues 27 to 30 (DSAL), 151 to 155 (QRLSR), and 232 to 237 (RCVGYR).

The protein belongs to the IPP transferase family. Monomer. Mg(2+) serves as cofactor.

The catalysed reaction is adenosine(37) in tRNA + dimethylallyl diphosphate = N(6)-dimethylallyladenosine(37) in tRNA + diphosphate. Catalyzes the transfer of a dimethylallyl group onto the adenine at position 37 in tRNAs that read codons beginning with uridine, leading to the formation of N6-(dimethylallyl)adenosine (i(6)A). The sequence is that of tRNA dimethylallyltransferase from Shewanella frigidimarina (strain NCIMB 400).